A 947-amino-acid polypeptide reads, in one-letter code: Bifunctional glutamine synthetase adenylyltransferase/adenylyl-removing enzyme (947 aa).

Residues 1 to 440 are adenylyl removase; sequence MTPLSSPLSQ…VFNELIGDDE (440 aa). The tract at residues 450-947 is adenylyl transferase; sequence SEPWREVWQD…ASWRKWLVAV (498 aa).

It belongs to the GlnE family. Mg(2+) is required as a cofactor.

It catalyses the reaction [glutamine synthetase]-O(4)-(5'-adenylyl)-L-tyrosine + phosphate = [glutamine synthetase]-L-tyrosine + ADP. The catalysed reaction is [glutamine synthetase]-L-tyrosine + ATP = [glutamine synthetase]-O(4)-(5'-adenylyl)-L-tyrosine + diphosphate. Involved in the regulation of glutamine synthetase GlnA, a key enzyme in the process to assimilate ammonia. When cellular nitrogen levels are high, the C-terminal adenylyl transferase (AT) inactivates GlnA by covalent transfer of an adenylyl group from ATP to specific tyrosine residue of GlnA, thus reducing its activity. Conversely, when nitrogen levels are low, the N-terminal adenylyl removase (AR) activates GlnA by removing the adenylyl group by phosphorolysis, increasing its activity. The regulatory region of GlnE binds the signal transduction protein PII (GlnB) which indicates the nitrogen status of the cell. In Salmonella typhimurium (strain LT2 / SGSC1412 / ATCC 700720), this protein is Bifunctional glutamine synthetase adenylyltransferase/adenylyl-removing enzyme.